We begin with the raw amino-acid sequence, 214 residues long: Pyridoxine/pyridoxamine 5'-phosphate oxidase (214 aa).

Substrate contacts are provided by residues 8 to 11 and Lys66; that span reads RINY. FMN contacts are provided by residues 61-66, 76-77, Arg82, Lys83, and Gln105; these read RILLIK and FT. Tyr123, Arg127, and Ser131 together coordinate substrate. Residues 140–141 and Trp184 contribute to the FMN site; that span reads QS. 190-192 lines the substrate pocket; it reads RLH. FMN is bound at residue Arg194.

It belongs to the pyridoxamine 5'-phosphate oxidase family. As to quaternary structure, homodimer. FMN is required as a cofactor.

It catalyses the reaction pyridoxamine 5'-phosphate + O2 + H2O = pyridoxal 5'-phosphate + H2O2 + NH4(+). The catalysed reaction is pyridoxine 5'-phosphate + O2 = pyridoxal 5'-phosphate + H2O2. It functions in the pathway cofactor metabolism; pyridoxal 5'-phosphate salvage; pyridoxal 5'-phosphate from pyridoxamine 5'-phosphate: step 1/1. It participates in cofactor metabolism; pyridoxal 5'-phosphate salvage; pyridoxal 5'-phosphate from pyridoxine 5'-phosphate: step 1/1. Functionally, catalyzes the oxidation of either pyridoxine 5'-phosphate (PNP) or pyridoxamine 5'-phosphate (PMP) into pyridoxal 5'-phosphate (PLP). The protein is Pyridoxine/pyridoxamine 5'-phosphate oxidase of Burkholderia vietnamiensis (strain G4 / LMG 22486) (Burkholderia cepacia (strain R1808)).